We begin with the raw amino-acid sequence, 118 residues long: Large ribosomal subunit protein bL19 (118 aa).

The protein belongs to the bacterial ribosomal protein bL19 family.

This protein is located at the 30S-50S ribosomal subunit interface and may play a role in the structure and function of the aminoacyl-tRNA binding site. This chain is Large ribosomal subunit protein bL19, found in Hahella chejuensis (strain KCTC 2396).